We begin with the raw amino-acid sequence, 622 residues long: ABC transporter permease protein YxdM (622 aa).

Helical transmembrane passes span 20–40, 56–76, 118–138, 154–174, 195–215, 219–239, 279–299, 498–518, 558–578, and 590–610; these read AFFL…MFLF, GLTA…LYSV, AGII…AYIL, ITAC…ILFV, PSVL…GMVL, VHGA…YFFF, LFFI…VLAM, TVQL…VFFV, IQLA…TLFA, and VAGP…LFFL.

It belongs to the ABC-4 integral membrane protein family. In terms of assembly, the complex is composed of two ATP-binding proteins (YxdL) and two transmembrane proteins (YxdM).

The protein localises to the cell membrane. Functionally, part of the ABC transporter complex YxdLM which could be involved in peptide resistance. This chain is ABC transporter permease protein YxdM (yxdM), found in Bacillus subtilis (strain 168).